A 791-amino-acid chain; its full sequence is Vezatin (791 aa).

2 helical membrane-spanning segments follow: residues 138–158 (IATPNIWEMSVLFAFLSALAA) and 163–183 (SISSSLVWGPSLILFAAFTVL). The stretch at 435–464 (VRSLQLHLKALLNEVIILEDELEKLSSCKE) forms a coiled coil. Residues 752–769 (GDEWDDDDDDNDNDDDNY) are compositionally biased toward acidic residues. The tract at residues 752-791 (GDEWDDDDDDNDNDDDNYDQVKNVESHEKERNNVSLQLEE) is disordered. Over residues 773–783 (KNVESHEKERN) the composition is skewed to basic and acidic residues.

This sequence belongs to the vezatin family. Interacts with myosin VIIa and the cadherin-catenins complex.

It is found in the cell membrane. The protein localises to the cell junction. It localises to the adherens junction. Its subcellular location is the nucleus. Its function is as follows. Plays a pivotal role in the establishment of adherens junctions and their maintenance in adult life. The polypeptide is Vezatin (vezt) (Xenopus tropicalis (Western clawed frog)).